The following is a 214-amino-acid chain: MQPMFDRERNGLDTTGLGLIPMVIETSGRGERAYDIYSRLLRERIIFLVGPVTETSANLVIAQLLFLESENSEKDIFLYINSPGGLVTAGLAVYDTIQFIKPDVSTLCVGQAASMGAFLLTAGAKGKRYCLPNSRVMIHQPLGGFQGQASDIEIHAKEILALKSRLNEIMAKHTGQTVKAIERDTDRDNFLGAEAAVKYGLVDAVLTSREVKQE.

The active-site Nucleophile is Ser-114. Residue His-139 is part of the active site.

This sequence belongs to the peptidase S14 family. Fourteen ClpP subunits assemble into 2 heptameric rings which stack back to back to give a disk-like structure with a central cavity, resembling the structure of eukaryotic proteasomes.

The protein localises to the cytoplasm. The catalysed reaction is Hydrolysis of proteins to small peptides in the presence of ATP and magnesium. alpha-casein is the usual test substrate. In the absence of ATP, only oligopeptides shorter than five residues are hydrolyzed (such as succinyl-Leu-Tyr-|-NHMec, and Leu-Tyr-Leu-|-Tyr-Trp, in which cleavage of the -Tyr-|-Leu- and -Tyr-|-Trp bonds also occurs).. Functionally, cleaves peptides in various proteins in a process that requires ATP hydrolysis. Has a chymotrypsin-like activity. Plays a major role in the degradation of misfolded proteins. In Nitrosomonas europaea (strain ATCC 19718 / CIP 103999 / KCTC 2705 / NBRC 14298), this protein is ATP-dependent Clp protease proteolytic subunit.